A 191-amino-acid polypeptide reads, in one-letter code: Phosphopantetheine adenylyltransferase (191 aa).

Position 8 (Ser8) interacts with substrate. ATP-binding positions include 8–9 (SF) and His16. The substrate site is built by Lys40, Thr72, and Arg86. Residues 87 to 89 (GLR), Glu97, and 122 to 128 (YSFLSSS) contribute to the ATP site.

Belongs to the bacterial CoaD family. In terms of assembly, homohexamer. The cofactor is Mg(2+).

Its subcellular location is the cytoplasm. The enzyme catalyses (R)-4'-phosphopantetheine + ATP + H(+) = 3'-dephospho-CoA + diphosphate. It participates in cofactor biosynthesis; coenzyme A biosynthesis; CoA from (R)-pantothenate: step 4/5. In terms of biological role, reversibly transfers an adenylyl group from ATP to 4'-phosphopantetheine, yielding dephospho-CoA (dPCoA) and pyrophosphate. In Nostoc sp. (strain PCC 7120 / SAG 25.82 / UTEX 2576), this protein is Phosphopantetheine adenylyltransferase.